Reading from the N-terminus, the 349-residue chain is Phenylalanine--tRNA ligase alpha subunit (349 aa).

Position 259 (glutamate 259) interacts with Mg(2+).

This sequence belongs to the class-II aminoacyl-tRNA synthetase family. Phe-tRNA synthetase alpha subunit type 1 subfamily. As to quaternary structure, tetramer of two alpha and two beta subunits. It depends on Mg(2+) as a cofactor.

Its subcellular location is the cytoplasm. The catalysed reaction is tRNA(Phe) + L-phenylalanine + ATP = L-phenylalanyl-tRNA(Phe) + AMP + diphosphate + H(+). The protein is Phenylalanine--tRNA ligase alpha subunit of Lactobacillus helveticus (strain DPC 4571).